The sequence spans 423 residues: Glucose-1-phosphate adenylyltransferase (423 aa).

Residues Y108, G173, 188 to 189 (EK), and S207 contribute to the alpha-D-glucose 1-phosphate site.

The protein belongs to the bacterial/plant glucose-1-phosphate adenylyltransferase family. Homotetramer.

The catalysed reaction is alpha-D-glucose 1-phosphate + ATP + H(+) = ADP-alpha-D-glucose + diphosphate. It functions in the pathway glycan biosynthesis; glycogen biosynthesis. Its function is as follows. Involved in the biosynthesis of ADP-glucose, a building block required for the elongation reactions to produce glycogen. Catalyzes the reaction between ATP and alpha-D-glucose 1-phosphate (G1P) to produce pyrophosphate and ADP-Glc. This Francisella tularensis subsp. novicida (strain U112) protein is Glucose-1-phosphate adenylyltransferase.